A 590-amino-acid chain; its full sequence is Aspartate--tRNA ligase (590 aa).

Residue E174 coordinates L-aspartate. Positions 198 to 201 (QLMK) are aspartate. R220 contributes to the L-aspartate binding site. ATP-binding positions include 220 to 222 (RDE) and Q229. H443 is an L-aspartate binding site. E484 contributes to the ATP binding site. R491 lines the L-aspartate pocket. 536-539 (GLDR) provides a ligand contact to ATP.

Belongs to the class-II aminoacyl-tRNA synthetase family. Type 1 subfamily. As to quaternary structure, homodimer.

It localises to the cytoplasm. The catalysed reaction is tRNA(Asp) + L-aspartate + ATP = L-aspartyl-tRNA(Asp) + AMP + diphosphate. Its function is as follows. Catalyzes the attachment of L-aspartate to tRNA(Asp) in a two-step reaction: L-aspartate is first activated by ATP to form Asp-AMP and then transferred to the acceptor end of tRNA(Asp). The sequence is that of Aspartate--tRNA ligase from Lactococcus lactis subsp. cremoris (strain SK11).